Reading from the N-terminus, the 2731-residue chain is Teneurin-1 (2731 aa).

The segment at 1 to 72 (MEQTDCKPYQ…KRKDVEKSTQ (72 aa)) is disordered. Positions 1–318 (MEQTDCKPYQ…KPYRCCNWKC (318 aa)) constitute a Teneurin N-terminal domain. The Cytoplasmic portion of the chain corresponds to 1 to 324 (MEQTDCKPYQ…NWKCTALSAT (324 aa)). Positions 44–55 (ETLHEYNQELRR) are enriched in basic and acidic residues. Residues 62-65 (RKRK) carry the Nuclear localization signal (NLS) motif. A Phosphoserine modification is found at serine 105. Threonine 109 carries the phosphothreonine modification. A Phosphoserine modification is found at serine 116. Residues 175–241 (DSAQDMQSSP…PAPPTSTQDS (67 aa)) form a disordered region. Residues 178 to 189 (QDMQSSPHNQFT) are compositionally biased toward polar residues. A compositionally biased stretch (pro residues) spans 192 to 201 (PLPPPPPPPH). A compositionally biased stretch (polar residues) spans 214 to 224 (DSLQRRSMTTR). Residues 290 to 297 (PPPRPLPR) carry the Required for interaction with SORBS1 (Ten-1 ICD form) motif. The chain crosses the membrane as a helical span at residues 325-345 (AITVTLALLLAYVIAVHLFGL). Residues 346-2731 (TWQLQPVGQI…FMRQSEIGRR (2386 aa)) lie on the Extracellular side of the membrane. Asparagine 432 is a glycosylation site (N-linked (GlcNAc...) asparagine). 8 consecutive EGF-like domains span residues 527–558 (IMDD…PDCA), 559–590 (RDSC…ECDV), 591–623 (PEEQ…EICE), 624–656 (EEDC…NCET), 657–690 (PLPI…SDCS), 691–720 (TELC…GPTC), 721–752 (EERS…DHCT), and 760–795 (VRDG…TGCN). 22 cysteine pairs are disulfide-bonded: cysteine 531-cysteine 541, cysteine 535-cysteine 546, cysteine 548-cysteine 557, cysteine 566-cysteine 577, cysteine 579-cysteine 588, cysteine 595-cysteine 606, cysteine 600-cysteine 611, cysteine 613-cysteine 622, cysteine 627-cysteine 638, cysteine 632-cysteine 643, cysteine 645-cysteine 654, cysteine 665-cysteine 678, cysteine 680-cysteine 689, cysteine 694-cysteine 704, cysteine 698-cysteine 709, cysteine 711-cysteine 720, cysteine 725-cysteine 735, cysteine 729-cysteine 740, cysteine 742-cysteine 751, cysteine 764-cysteine 774, cysteine 768-cysteine 783, and cysteine 785-cysteine 794. Residues asparagine 904 and asparagine 1083 are each glycosylated (N-linked (GlcNAc...) asparagine). 5 NHL repeats span residues 1193–1218 (LFAP…VRRI), 1298–1342 (SHCG…NAVI), 1357–1408 (LSCD…IAGR), 1420–1464 (FLVS…VTTN), and 1487–1530 (CFSG…ISKN). Residues 1540–1559 (YEIASPADQELYQFTVNGTH) form a YD 1 repeat. 2 N-linked (GlcNAc...) asparagine glycosylation sites follow: asparagine 1556 and asparagine 1573. YD repeat units follow at residues 1576–1596 (YNAE…VHIR), 1614–1638 (YWLT…ALMT), 1639–1660 (YPGN…TVYE), and 1661–1681 (YDPE…SSFH). Residues asparagine 1669, asparagine 1705, asparagine 1743, asparagine 1763, asparagine 1787, and asparagine 1848 are each glycosylated (N-linked (GlcNAc...) asparagine). YD repeat units lie at residues 1851–1870 (YSPS…EKME), 1871–1891 (YDQS…WSYT), 1892–1910 (YLEK…YIFE), 1911–1931 (YDQS…HSLQ), 1939–1955 (YRNI…FIQD), 1956–1975 (YSRD…RRVL), 1976–1995 (YKYT…TQVT), 1998–2018 (YEES…FICT), 2021–2041 (YRQT…EGLV), 2091–2111 (YDLN…FNAN), and 2119–2139 (YEIL…MGRM). Residue asparagine 2151 is glycosylated (N-linked (GlcNAc...) asparagine). YD repeat units follow at residues 2159–2179 (YDAD…WRYS), 2180–2200 (YDLN…LTPL), 2202–2222 (YDLR…DEDG), 2234–2254 (YNSN…TVQY), and 2256–2276 (YDGL…LQFF). Residue asparagine 2291 is glycosylated (N-linked (GlcNAc...) asparagine). YD repeat units follow at residues 2302–2319 (YDLQ…GEEY) and 2320–2343 (YVAC…IKEI). Residue serine 2586 is modified to Phosphoserine. The N-linked (GlcNAc...) asparagine glycan is linked to asparagine 2608.

Belongs to the tenascin family. Teneurin subfamily. In terms of assembly, homodimer; disulfide-linked. Heterodimer with either TENM2 or TENM3. May also form heterodimer with TENM4. Ten-1 ICD interacts with SORBS1 (via third SH3 domain). Interacts with MBD1 isoform 2. Ten-1 ICD interacts with HINT1. Once secreted, may also be cleaved to give rise to the TCAP-1 form. In terms of processing, derives from the plasma membrane form by proteolytic processing. Further proteolytic cleavage may generate 11.9 and 4.7 kDa bioactive peptides. As to expression, isoform 1 and isoform 2 are expressed in the brain. Isoform 2 is expressed in the granular layer of the dentate gyrus and the pyramidal layer (Py) of the CA1, CA2 and CA3 of the hippocampus (at protein level). Expressed in the cortex, thalamus, CA1, CA2, CA3, dentate gyrus and granular layer of the hippocampus. Weakly expressed in kidney, testis and lung.

It localises to the cell membrane. Its subcellular location is the cytoplasm. The protein localises to the secreted. It is found in the nucleus. The protein resides in the nucleus speckle. It localises to the nucleus matrix. Its subcellular location is the cytoskeleton. In terms of biological role, involved in neural development, regulating the establishment of proper connectivity within the nervous system. May function as a cellular signal transducer. Its function is as follows. Plays a role in the regulation of neuroplasticity in the limbic system. Mediates a rapid reorganization of actin- and tubulin-based cytoskeleton elements with an increase in dendritic arborization and spine density formation of neurons in the hippocampus and amygdala. Induces BDNF transcription inhibition in neurons. Activates the mitogen-activated protein (MAP) kinase 2 (MEK2) and extracellular signal-regulated kinase (ERK) cascade. Also acts as a bioactive neuroprotective peptide on limbic neurons of the brain and regulates stress-induced behavior: attenuates alkalosis-associated necrotic cell death and the effects of corticotropin-releasing factor (CRF) on c-fos/FOS induction and on the reinstatement of cocaine seeking. Functionally, induces gene transcription activation. This is Teneurin-1 (Tenm1) from Mus musculus (Mouse).